The primary structure comprises 471 residues: Glutamate--tRNA ligase (471 aa).

The 'HIGH' region signature appears at 9–19 (PSPTGYLHVGG). 4 residues coordinate Zn(2+): Cys98, Cys100, Cys125, and His127. The 'KMSKS' region signature appears at 237 to 241 (KLSKR). Residue Lys240 participates in ATP binding.

It belongs to the class-I aminoacyl-tRNA synthetase family. Glutamate--tRNA ligase type 1 subfamily. As to quaternary structure, monomer. Zn(2+) serves as cofactor.

The protein localises to the cytoplasm. The enzyme catalyses tRNA(Glu) + L-glutamate + ATP = L-glutamyl-tRNA(Glu) + AMP + diphosphate. Catalyzes the attachment of glutamate to tRNA(Glu) in a two-step reaction: glutamate is first activated by ATP to form Glu-AMP and then transferred to the acceptor end of tRNA(Glu). The chain is Glutamate--tRNA ligase from Salmonella dublin (strain CT_02021853).